The chain runs to 315 residues: tRNA dimethylallyltransferase (315 aa).

Residue 10 to 17 coordinates ATP; that stretch reads GPTAVGKT. 12–17 is a binding site for substrate; that stretch reads TAVGKT. Residues 35 to 38 form an interaction with substrate tRNA region; that stretch reads DSMQ.

Belongs to the IPP transferase family. Monomer. It depends on Mg(2+) as a cofactor.

The enzyme catalyses adenosine(37) in tRNA + dimethylallyl diphosphate = N(6)-dimethylallyladenosine(37) in tRNA + diphosphate. Its function is as follows. Catalyzes the transfer of a dimethylallyl group onto the adenine at position 37 in tRNAs that read codons beginning with uridine, leading to the formation of N6-(dimethylallyl)adenosine (i(6)A). The polypeptide is tRNA dimethylallyltransferase (Geobacillus kaustophilus (strain HTA426)).